A 400-amino-acid chain; its full sequence is Acetate kinase (400 aa).

Position 10 (Asn-10) interacts with Mg(2+). ATP is bound at residue Lys-17. Arg-89 lines the substrate pocket. Asp-148 serves as the catalytic Proton donor/acceptor. Residues 208 to 212, 283 to 285, and 331 to 335 each bind ATP; these read HLGNG, DCR, and GIGEN. Glu-385 is a binding site for Mg(2+).

The protein belongs to the acetokinase family. Homodimer. The cofactor is Mg(2+). Mn(2+) serves as cofactor.

Its subcellular location is the cytoplasm. The enzyme catalyses acetate + ATP = acetyl phosphate + ADP. It functions in the pathway metabolic intermediate biosynthesis; acetyl-CoA biosynthesis; acetyl-CoA from acetate: step 1/2. In terms of biological role, catalyzes the formation of acetyl phosphate from acetate and ATP. Can also catalyze the reverse reaction. The polypeptide is Acetate kinase (Haemophilus ducreyi (strain 35000HP / ATCC 700724)).